Consider the following 203-residue polypeptide: Holliday junction branch migration complex subunit RuvA (203 aa).

A domain I region spans residues 1 to 63; it reads MIGKLSGKID…EEHIHLYGFL (63 aa). A domain II region spans residues 64–142; that stretch reads TLEEKNFFNL…KISSGSVIIK (79 aa). The interval 143–149 is flexible linker; that stretch reads DSLNIKN. The segment at 150 to 203 is domain III; it reads ITPVASNEVIKALVNLGFSRFEAQNAVQGIIIQNPEISIDELIKTALKNRNAGL.

Belongs to the RuvA family. In terms of assembly, homotetramer. Forms an RuvA(8)-RuvB(12)-Holliday junction (HJ) complex. HJ DNA is sandwiched between 2 RuvA tetramers; dsDNA enters through RuvA and exits via RuvB. An RuvB hexamer assembles on each DNA strand where it exits the tetramer. Each RuvB hexamer is contacted by two RuvA subunits (via domain III) on 2 adjacent RuvB subunits; this complex drives branch migration. In the full resolvosome a probable DNA-RuvA(4)-RuvB(12)-RuvC(2) complex forms which resolves the HJ.

It is found in the cytoplasm. Its function is as follows. The RuvA-RuvB-RuvC complex processes Holliday junction (HJ) DNA during genetic recombination and DNA repair, while the RuvA-RuvB complex plays an important role in the rescue of blocked DNA replication forks via replication fork reversal (RFR). RuvA specifically binds to HJ cruciform DNA, conferring on it an open structure. The RuvB hexamer acts as an ATP-dependent pump, pulling dsDNA into and through the RuvAB complex. HJ branch migration allows RuvC to scan DNA until it finds its consensus sequence, where it cleaves and resolves the cruciform DNA. The chain is Holliday junction branch migration complex subunit RuvA from Rickettsia felis (strain ATCC VR-1525 / URRWXCal2) (Rickettsia azadi).